We begin with the raw amino-acid sequence, 460 residues long: Heme sensor protein HssS (460 aa).

Transmembrane regions (helical) follow at residues 11–31 and 164–184; these read IYTI…TNII and IFLA…VISS. The HAMP domain maps to 186 to 238; it reads YAIIKPIQQLKRATERLMHGNFDEVIHVTRKDEFGTLQYRFDKMRLSLKQLDD. The Histidine kinase domain occupies 246 to 456; sequence NVSHEIKTPL…TFTITFKKVP (211 aa). His-249 bears the Phosphohistidine; by autocatalysis mark.

In terms of processing, autophosphorylated.

Its subcellular location is the cell membrane. The catalysed reaction is ATP + protein L-histidine = ADP + protein N-phospho-L-histidine.. In terms of biological role, member of the two-component regulatory system HssS/HssR involved in intracellular heme homeostasis and tempering of staphylococcal virulence. HssS functions as a heme sensor histidine kinase which is autophosphorylated at a histidine residue and transfers its phosphate group to an aspartate residue of HssR. HssR/HssS activates the expression of hrtAB, an efflux pump, in response to extracellular heme, hemin, hemoglobin or blood. This Staphylococcus saprophyticus subsp. saprophyticus (strain ATCC 15305 / DSM 20229 / NCIMB 8711 / NCTC 7292 / S-41) protein is Heme sensor protein HssS (hssS).